A 603-amino-acid polypeptide reads, in one-letter code: Linalool synthase Tps-5031L19, chloroplastic (603 aa).

Residues 1–36 (MSSMRTYVAIMKKPSVEHVDNVDKKASKPSWRVSLS) constitute a chloroplast transit peptide. Arg322, Asp359, Asp363, Arg500, and Asp503 together coordinate (2E)-geranyl diphosphate. 2 residues coordinate Mg(2+): Asp359 and Asp363. Positions 359–363 (DDVYD) match the DDXXD motif motif. Mg(2+) contacts are provided by Asp503, Thr507, and Glu511.

The protein belongs to the terpene synthase family. Tpsb subfamily. As to quaternary structure, monomer. Mg(2+) serves as cofactor. Mn(2+) is required as a cofactor.

It is found in the plastid. The protein resides in the chloroplast. It carries out the reaction (2E)-geranyl diphosphate + H2O = linalool + diphosphate. It participates in secondary metabolite biosynthesis; terpenoid biosynthesis. Functionally, monoterpene synthase (mono-TPS) involved in the biosynthesis of monoterpenes natural products. Catalyzes the conversion of (2E)-geranyl diphosphate (GPP) into linalool. In Perilla frutescens var. hirtella (Perilla citriodora), this protein is Linalool synthase Tps-5031L19, chloroplastic.